A 269-amino-acid chain; its full sequence is UPF0739 protein C1orf74 (269 aa).

The protein belongs to the UPF0739 family.

The protein is UPF0739 protein C1orf74 (C1orf74) of Homo sapiens (Human).